The following is a 207-amino-acid chain: Small ribosomal subunit protein uS4 (207 aa).

Residues 31 to 53 form a disordered region; that stretch reads KAKFDSKPGQHGRTSGTRTSDFG. A compositionally biased stretch (polar residues) spans 42 to 52; the sequence is GRTSGTRTSDF. The 62-residue stretch at 97 to 158 folds into the S4 RNA-binding domain; it reads SRLDNVVYRM…KSKKQTRVTE (62 aa).

This sequence belongs to the universal ribosomal protein uS4 family. As to quaternary structure, part of the 30S ribosomal subunit. Contacts protein S5. The interaction surface between S4 and S5 is involved in control of translational fidelity.

Functionally, one of the primary rRNA binding proteins, it binds directly to 16S rRNA where it nucleates assembly of the body of the 30S subunit. In terms of biological role, with S5 and S12 plays an important role in translational accuracy. This is Small ribosomal subunit protein uS4 from Polaromonas sp. (strain JS666 / ATCC BAA-500).